The sequence spans 421 residues: Leucine-rich repeat-containing protein 42 (421 aa).

LRR repeat units lie at residues Val-149–Lys-170, Glu-174–Leu-195, Ser-202–Thr-222, Asn-234–Phe-255, and Lys-259–Leu-280. The segment at Pro-376–Lys-406 is disordered. Positions Glu-396–Lys-406 are enriched in low complexity. Position 399 is a phosphoserine (Ser-399).

Belongs to the LRRC42 family.

The polypeptide is Leucine-rich repeat-containing protein 42 (Lrrc42) (Mus musculus (Mouse)).